The following is a 331-amino-acid chain: Heme A synthase (331 aa).

8 helical membrane-spanning segments follow: residues 6–26, 87–107, 124–144, 154–174, 193–213, 251–271, 279–299, and 301–321; these read VAIWLFLCSLMVICMVGIGGF, YVHRLIARLTGLVFILPFIYF, ALLFGILQAFAGWYMVKSGLV, LALHLLLALVIFALLSYQFFD, IWIILILVTVQIIFGAFVAGL, VQFIHRALALLILVLTAILTI, LYVMLFSVIIQVILGIVTLLL, and IPMAIAIAHQMFSFILFGSGL. His-255 serves as a coordination point for heme. His-309 is a heme binding site.

Belongs to the COX15/CtaA family. Type 2 subfamily. In terms of assembly, interacts with CtaB. Heme b is required as a cofactor.

Its subcellular location is the cell membrane. The catalysed reaction is Fe(II)-heme o + 2 A + H2O = Fe(II)-heme a + 2 AH2. Its pathway is porphyrin-containing compound metabolism; heme A biosynthesis; heme A from heme O: step 1/1. Its function is as follows. Catalyzes the conversion of heme O to heme A by two successive hydroxylations of the methyl group at C8. The first hydroxylation forms heme I, the second hydroxylation results in an unstable dihydroxymethyl group, which spontaneously dehydrates, resulting in the formyl group of heme A. The sequence is that of Heme A synthase from Wolbachia pipientis subsp. Culex pipiens (strain wPip).